The primary structure comprises 424 residues: Tubulin gamma chain, nucleomorph (424 aa).

Residue 137-143 coordinates GTP; sequence NGGTGAG.

This sequence belongs to the tubulin family.

Functionally, tubulin is the major constituent of microtubules. The gamma chain is found at microtubule organizing centers (MTOC) such as the spindle poles or the centrosome, suggesting that it is involved in the minus-end nucleation of microtubule assembly. The protein is Tubulin gamma chain, nucleomorph (tubG) of Guillardia theta (Cryptophyte).